The primary structure comprises 444 residues: Phosphoglucosamine mutase (444 aa).

Ser-100 (phosphoserine intermediate) is an active-site residue. Mg(2+) contacts are provided by Ser-100, Asp-234, Asp-236, and Asp-238. Ser-100 carries the phosphoserine modification.

This sequence belongs to the phosphohexose mutase family. Mg(2+) serves as cofactor. Activated by phosphorylation.

The enzyme catalyses alpha-D-glucosamine 1-phosphate = D-glucosamine 6-phosphate. Functionally, catalyzes the conversion of glucosamine-6-phosphate to glucosamine-1-phosphate. This is Phosphoglucosamine mutase from Rubrobacter xylanophilus (strain DSM 9941 / JCM 11954 / NBRC 16129 / PRD-1).